A 534-amino-acid polypeptide reads, in one-letter code: Glycerol kinase 5 (534 aa).

ATP-binding residues include Ser-33 and Thr-34. Glycerol contacts are provided by Arg-103, Asp-280, and Gln-281. Residues Thr-302, Gly-345, and Gly-445 each coordinate ATP.

Belongs to the FGGY kinase family. As to expression, expressed predominantly in sebaceous glands.

Its subcellular location is the cytoplasm. The enzyme catalyses glycerol + ATP = sn-glycerol 3-phosphate + ADP + H(+). It functions in the pathway polyol metabolism; glycerol degradation via glycerol kinase pathway; sn-glycerol 3-phosphate from glycerol: step 1/1. Functionally, skin-specific kinase that plays a key role in glycerol metabolism, catalyzing its phosphorylation to produce sn-glycerol 3-phosphate. Involved in skin-specific regulation of sterol regulatory element-binding protein (SREBP) processing and lipid biosynthesis. This is Glycerol kinase 5 (Gk5) from Mus musculus (Mouse).